Here is a 214-residue protein sequence, read N- to C-terminus: Thymidylate kinase (214 aa).

7-14 (GIDGAGKS) provides a ligand contact to ATP.

Belongs to the thymidylate kinase family.

It carries out the reaction dTMP + ATP = dTDP + ADP. In terms of biological role, phosphorylation of dTMP to form dTDP in both de novo and salvage pathways of dTTP synthesis. The sequence is that of Thymidylate kinase from Chlorobium luteolum (strain DSM 273 / BCRC 81028 / 2530) (Pelodictyon luteolum).